A 348-amino-acid chain; its full sequence is Sensor protein VraS (348 aa).

The next 2 membrane-spanning stretches (helical) occupy residues 13–33 (ILVY…VNII) and 43–63 (IFGI…CIIV). The region spanning 150-341 (RLARELHDSV…RIEVKAPLNR (192 aa)) is the Histidine kinase domain.

The protein localises to the cell membrane. The enzyme catalyses ATP + protein L-histidine = ADP + protein N-phospho-L-histidine.. In terms of biological role, member of the two-component regulatory system VraS/VraR involved in the control of the cell wall peptidoglycan biosynthesis. Probably activates VraR by phosphorylation. The chain is Sensor protein VraS (vraS) from Staphylococcus haemolyticus (strain JCSC1435).